The chain runs to 665 residues: MTERLGSVFIEGVSPELDAGRHAVKRVVGERCTVKADVFKEGHDVLVAVIRWRQVTPRAQQTDWEEVPMRFLGNDRWEGEFPLTRNGRYEYTIEAWPDLFRTWTSELKRKVDAGRDVRSELLEGAALLEGAVARARTAKQPDDARVLGEAAVRLRQPPSPDLLAVALAPELADVASTHPDRSLARRYDKVLEVFADREKARFSAWYEFFPRSAKRDGVTHATFRDAEGWLPYIQQLGFDTVYLPPIHPIGRTARKGKNNSLAAAADDVGSPWAIGASEGGHKAVHPKLGTLEDFRHFVETAQAHGIEVALDLAFQCSPDHPYVKEHPEWFQHRPDGTIKTAENPPKRYEDIVNFDWMGPARESLWAELESVVLHWVKQGVNTFRVDNPHTKPTQFWAWLIRRVQEAHPQVLFLSEAFTRPKVMKALGKVGFTQSYTYFTWRNFKGELQEYLEEITQPPVSDYFRGNLWPNTPDILPEFLQNAGPGAFRLRAALAGTLSSVWGMYCGYELCEGRPIPGKEEYTDSEKYQLVAWDLDRPGNIRDWIARLNAARRTHPALHQYGTLRFFSSNNDRVLFYGKRTPDGGSLVLMAVSLDPYAAQEALLHVPLEWLGARPDETYQVHELMSDQRSLWQGPDVQVRLTPEQPAALWAVHRFRRTENAFDYYE.

Alpha-maltose 1-phosphate-binding residues include K255, Q315, and D350. D386 functions as the Nucleophile in the catalytic mechanism. N387 serves as a coordination point for alpha-maltose 1-phosphate. The active-site Proton donor is E415. 526–527 (KY) contacts alpha-maltose 1-phosphate.

This sequence belongs to the glycosyl hydrolase 13 family. GlgE subfamily. In terms of assembly, homodimer.

The enzyme catalyses alpha-maltose 1-phosphate + [(1-&gt;4)-alpha-D-glucosyl](n) = [(1-&gt;4)-alpha-D-glucosyl](n+2) + phosphate. Its function is as follows. Maltosyltransferase that uses maltose 1-phosphate (M1P) as the sugar donor to elongate linear or branched alpha-(1-&gt;4)-glucans. Is involved in a branched alpha-glucan biosynthetic pathway from trehalose, together with TreS, Mak and GlgB. This Myxococcus xanthus (strain DK1622) protein is Alpha-1,4-glucan:maltose-1-phosphate maltosyltransferase.